The following is a 164-amino-acid chain: MTNGNGAPPEAAQAPQLNVLAQYTKDLSFENPNAPASLAPQAQQPSINIQINVTANTLADSEFEVTLAIEGKADNAGSLIFSFELLYAGVFRILNVPKENLHPLVMIECPRLLFPFAREIIATAVRDGGFPPLMLDPVDFVGLYRQNMERQAAAAASADEAKPS.

This sequence belongs to the SecB family. Homotetramer, a dimer of dimers. One homotetramer interacts with 1 SecA dimer.

The protein localises to the cytoplasm. Its function is as follows. One of the proteins required for the normal export of preproteins out of the cell cytoplasm. It is a molecular chaperone that binds to a subset of precursor proteins, maintaining them in a translocation-competent state. It also specifically binds to its receptor SecA. The chain is Protein-export protein SecB from Rhodopseudomonas palustris (strain BisB18).